The sequence spans 105 residues: Small ribosomal subunit protein uS10 (105 aa).

The protein belongs to the universal ribosomal protein uS10 family. In terms of assembly, part of the 30S ribosomal subunit.

Functionally, involved in the binding of tRNA to the ribosomes. This Desulfovibrio desulfuricans (strain ATCC 27774 / DSM 6949 / MB) protein is Small ribosomal subunit protein uS10.